A 95-amino-acid polypeptide reads, in one-letter code: Histone-like DNA-binding protein (95 aa).

Belongs to the bacterial histone-like protein family.

This chain is Histone-like DNA-binding protein, found in Rickettsia felis (strain ATCC VR-1525 / URRWXCal2) (Rickettsia azadi).